The sequence spans 164 residues: CDP-archaeol synthase (164 aa).

Helical transmembrane passes span 3-23 (LTVFFLLIWPPYVANGSAVFA), 55-75 (AIGIATGTVLGYFPNLVYHVI), 77-97 (VFDAFVLSASAVLGDLIGAFI), and 122-142 (FLVYSLFREIPVVYVLAAVVI).

Belongs to the CDP-archaeol synthase family. Requires Mg(2+) as cofactor.

The protein localises to the cell membrane. It carries out the reaction 2,3-bis-O-(geranylgeranyl)-sn-glycerol 1-phosphate + CTP + H(+) = CDP-2,3-bis-O-(geranylgeranyl)-sn-glycerol + diphosphate. Its pathway is membrane lipid metabolism; glycerophospholipid metabolism. Its function is as follows. Catalyzes the formation of CDP-2,3-bis-(O-geranylgeranyl)-sn-glycerol (CDP-archaeol) from 2,3-bis-(O-geranylgeranyl)-sn-glycerol 1-phosphate (DGGGP) and CTP. This reaction is the third ether-bond-formation step in the biosynthesis of archaeal membrane lipids. In Pyrobaculum aerophilum (strain ATCC 51768 / DSM 7523 / JCM 9630 / CIP 104966 / NBRC 100827 / IM2), this protein is CDP-archaeol synthase.